We begin with the raw amino-acid sequence, 269 residues long: Pyrroline-5-carboxylate reductase (269 aa).

The protein belongs to the pyrroline-5-carboxylate reductase family.

The protein localises to the cytoplasm. It catalyses the reaction L-proline + NADP(+) = (S)-1-pyrroline-5-carboxylate + NADPH + 2 H(+). The catalysed reaction is L-proline + NAD(+) = (S)-1-pyrroline-5-carboxylate + NADH + 2 H(+). The protein operates within amino-acid biosynthesis; L-proline biosynthesis; L-proline from L-glutamate 5-semialdehyde: step 1/1. Inhibited by p-chloromercuribenzoate. Functionally, catalyzes the reduction of 1-pyrroline-5-carboxylate (PCA) to L-proline. Does not catalyze the reverse reaction. This is Pyrroline-5-carboxylate reductase from Escherichia coli (strain K12).